Here is a 332-residue protein sequence, read N- to C-terminus: Solute carrier family 25 member 16 (332 aa).

Solcar repeat units lie at residues 34–120, 128–216, and 238–328; these read FYWL…YKTF, SGHV…LKSV, and LKTH…MKQF. The next 6 helical transmembrane spans lie at 37 to 57, 88 to 108, 134 to 154, 191 to 211, 244 to 264, and 299 to 319; these read LRSF…VAPL, GYLG…PYGA, LMAG…LDVV, GLMP…FTFG, LLCG…FDVT, and GLYR…AVAF.

The protein belongs to the mitochondrial carrier (TC 2.A.29) family.

It is found in the mitochondrion inner membrane. In terms of biological role, may be involved in the transport of coenzyme A in the mitochondrial matrix. Very little is known about the physiological function of this carrier. The protein is Solute carrier family 25 member 16 of Mus musculus (Mouse).